A 333-amino-acid chain; its full sequence is Trans-1,2-dihydrobenzene-1,2-diol dehydrogenase (333 aa).

This sequence belongs to the Gfo/Idh/MocA family. As to quaternary structure, homodimer.

The catalysed reaction is (1R,2R)-1,2-dihydrobenzene-1,2-diol + NADP(+) = catechol + NADPH + H(+). It catalyses the reaction D-xylose + NADP(+) = D-xylono-1,5-lactone + NADPH + H(+). The sequence is that of Trans-1,2-dihydrobenzene-1,2-diol dehydrogenase (Dhdh) from Mus musculus (Mouse).